We begin with the raw amino-acid sequence, 460 residues long: GTPase Der (460 aa).

EngA-type G domains lie at 3–167 (FTFA…PEPD) and 189–364 (IRVA…AVWN). Residues 9 to 16 (GRPNVGKS), 56 to 60 (DTAGL), 119 to 122 (NKSE), 195 to 202 (GRPNAGKS), 242 to 246 (DTAGL), and 307 to 310 (NKWD) each bind GTP. The KH-like domain maps to 365–449 (TRVPTAALNR…PVRIMLREKA (85 aa)).

This sequence belongs to the TRAFAC class TrmE-Era-EngA-EngB-Septin-like GTPase superfamily. EngA (Der) GTPase family. Associates with the 50S ribosomal subunit.

Its function is as follows. GTPase that plays an essential role in the late steps of ribosome biogenesis. The chain is GTPase Der from Rhodopseudomonas palustris (strain BisB5).